A 378-amino-acid chain; its full sequence is L-asparaginase-like protein GF11609 (378 aa).

An N-terminal signal peptide occupies residues 1-21 (MCSPLPLLILRLLLLTHPSLG). Disulfide bonds link C71–C76, C170–C186, and C325–C352.

The protein belongs to the Ntn-hydrolase family.

This is L-asparaginase-like protein GF11609 from Drosophila ananassae (Fruit fly).